Here is a 180-residue protein sequence, read N- to C-terminus: Shikimate kinase (180 aa).

ATP is bound at residue 14–19 (GAGKTC). Thr-18 lines the Mg(2+) pocket. Asp-36, Arg-60, and Gly-82 together coordinate substrate. Arg-120 serves as a coordination point for ATP. Arg-139 is a substrate binding site.

It belongs to the shikimate kinase family. Monomer. It depends on Mg(2+) as a cofactor.

The protein localises to the cytoplasm. It catalyses the reaction shikimate + ATP = 3-phosphoshikimate + ADP + H(+). It functions in the pathway metabolic intermediate biosynthesis; chorismate biosynthesis; chorismate from D-erythrose 4-phosphate and phosphoenolpyruvate: step 5/7. Its function is as follows. Catalyzes the specific phosphorylation of the 3-hydroxyl group of shikimic acid using ATP as a cosubstrate. In Stenotrophomonas maltophilia (strain K279a), this protein is Shikimate kinase.